Reading from the N-terminus, the 50-residue chain is Large ribosomal subunit protein bL33B (50 aa).

It belongs to the bacterial ribosomal protein bL33 family.

The sequence is that of Large ribosomal subunit protein bL33B from Metamycoplasma arthritidis (strain 158L3-1) (Mycoplasma arthritidis).